The following is a 588-amino-acid chain: uncharacterized protein (588 aa).

Residues 1 to 19 (MRSTAYLTALLSFLGATHA) form the signal peptide. N-linked (GlcNAc...) asparagine glycans are attached at residues N45 and N104. Residues 118–303 (GQGRIPLYSA…TSVTLRTFKD (186 aa)) form the FAD-binding PCMH-type domain. H156 is modified (pros-8alpha-FAD histidine). Residues N179, N312, N320, N351, N370, and N446 are each glycosylated (N-linked (GlcNAc...) asparagine).

This sequence belongs to the oxygen-dependent FAD-linked oxidoreductase family. The cofactor is FAD.

It localises to the secreted. This is an uncharacterized protein from Arthroderma benhamiae (strain ATCC MYA-4681 / CBS 112371) (Trichophyton mentagrophytes).